The following is an 87-amino-acid chain: Small ribosomal subunit protein bS18B (87 aa).

The protein belongs to the bacterial ribosomal protein bS18 family. In terms of assembly, part of the 30S ribosomal subunit. Forms a tight heterodimer with protein bS6.

Its function is as follows. Binds as a heterodimer with protein bS6 to the central domain of the 16S rRNA, where it helps stabilize the platform of the 30S subunit. In Mycobacterium marinum (strain ATCC BAA-535 / M), this protein is Small ribosomal subunit protein bS18B.